The following is a 251-amino-acid chain: Haloacid dehalogenase-like hydrolase domain-containing protein 3 (251 aa).

Lys-15 carries the post-translational modification N6-acetyllysine; alternate. Lys-15 is modified (N6-succinyllysine; alternate). Lys-130 is modified (N6-acetyllysine).

This sequence belongs to the HAD-like hydrolase superfamily.

The sequence is that of Haloacid dehalogenase-like hydrolase domain-containing protein 3 (Hdhd3) from Mus musculus (Mouse).